A 344-amino-acid polypeptide reads, in one-letter code: tRNA N6-adenosine threonylcarbamoyltransferase (344 aa).

Residues His-110 and His-114 each contribute to the Fe cation site. Substrate is bound by residues 133 to 137 (VVSGA), Asp-166, Gly-179, and Asn-278. A Fe cation-binding site is contributed by Asp-303.

Belongs to the KAE1 / TsaD family. Fe(2+) is required as a cofactor.

The protein resides in the cytoplasm. The catalysed reaction is L-threonylcarbamoyladenylate + adenosine(37) in tRNA = N(6)-L-threonylcarbamoyladenosine(37) in tRNA + AMP + H(+). Its function is as follows. Required for the formation of a threonylcarbamoyl group on adenosine at position 37 (t(6)A37) in tRNAs that read codons beginning with adenine. Is involved in the transfer of the threonylcarbamoyl moiety of threonylcarbamoyl-AMP (TC-AMP) to the N6 group of A37, together with TsaE and TsaB. TsaD likely plays a direct catalytic role in this reaction. The sequence is that of tRNA N6-adenosine threonylcarbamoyltransferase from Chlamydia pneumoniae (Chlamydophila pneumoniae).